The chain runs to 559 residues: Hepatocyte nuclear factor 1-beta (559 aa).

Positions 1-31 (MVSKLTSLQQELLSALLSSGVTKEVLVQALE) are dimerization. The region spanning 1-32 (MVSKLTSLQQELLSALLSSGVTKEVLVQALEE) is the HNF-p1 domain. S49, S52, S75, and S80 each carry phosphoserine. In terms of domain architecture, POU-specific atypical spans 93-188 (KELQALNTEE…ILRQFNQTVQ (96 aa)). Residues 231 to 312 (MRRNRFKWGP…RRKEEEAFRQ (82 aa)) constitute a DNA-binding region (homeobox; HNF1-type). Low complexity predominate over residues 328–341 (NTLLSHSSPHHQPS). Residues 328-371 (NTLLSHSSPHHQPSTSPPNKLPGVRYNQQGNNEVTSSSTISHHG) form a disordered region. Residues 353–371 (YNQQGNNEVTSSSTISHHG) are compositionally biased toward polar residues.

Belongs to the HNF1 homeobox family. In terms of assembly, binds DNA as a dimer. Can form homodimer or heterodimer with HNF1-alpha. Interacts (via HNF-p1 domain) with PCBD1; the interaction increases its transactivation activity.

Its subcellular location is the nucleus. Functionally, transcription factor that binds to the inverted palindrome 5'-GTTAATNATTAAC-3'. Binds to the FPC element in the cAMP regulatory unit of the PLAU gene. Transcriptional activity is increased by coactivator PCBD1. The polypeptide is Hepatocyte nuclear factor 1-beta (HNF1B) (Sus scrofa (Pig)).